Reading from the N-terminus, the 427-residue chain is Serine--tRNA ligase (427 aa).

Residue 231 to 233 (TAE) participates in L-serine binding. ATP is bound at residue 262-264 (RSE). E285 contributes to the L-serine binding site. 349–352 (EISS) provides a ligand contact to ATP. Position 385 (S385) interacts with L-serine.

Belongs to the class-II aminoacyl-tRNA synthetase family. Type-1 seryl-tRNA synthetase subfamily. In terms of assembly, homodimer. The tRNA molecule binds across the dimer.

The protein localises to the cytoplasm. The catalysed reaction is tRNA(Ser) + L-serine + ATP = L-seryl-tRNA(Ser) + AMP + diphosphate + H(+). The enzyme catalyses tRNA(Sec) + L-serine + ATP = L-seryl-tRNA(Sec) + AMP + diphosphate + H(+). It functions in the pathway aminoacyl-tRNA biosynthesis; selenocysteinyl-tRNA(Sec) biosynthesis; L-seryl-tRNA(Sec) from L-serine and tRNA(Sec): step 1/1. Functionally, catalyzes the attachment of serine to tRNA(Ser). Is also able to aminoacylate tRNA(Sec) with serine, to form the misacylated tRNA L-seryl-tRNA(Sec), which will be further converted into selenocysteinyl-tRNA(Sec). This Listeria monocytogenes serotype 4b (strain CLIP80459) protein is Serine--tRNA ligase.